The chain runs to 133 residues: uncharacterized protein (133 aa).

The chain crosses the membrane as a helical span at residues 91–113; the sequence is LFATALISCIPSSFSALSFLATL.

It is found in the membrane. This is an uncharacterized protein from Saccharomyces cerevisiae (strain ATCC 204508 / S288c) (Baker's yeast).